The sequence spans 608 residues: Cilia- and flagella-associated protein 100 (608 aa).

Residues 1 to 17 are compositionally biased toward polar residues; that stretch reads MSETLSNIVSKNMTNDK. Residues 1-57 are disordered; that stretch reads MSETLSNIVSKNMTNDKNSLESMNISSSSSAEENPKKQAKKXKERGPDPSANPFHLS. Over residues 20 to 32 the composition is skewed to low complexity; it reads LESMNISSSSSAE. Coiled coils occupy residues 164–196 and 230–257; these read TLDC…LAKD and LEIR…QHYK. Disordered stretches follow at residues 291–320 and 339–377; these read ASKD…AKEG and LSSP…GEEP. A compositionally biased stretch (low complexity) spans 339–361; the sequence is LSSPQQGSQPSESSGGNSRGSNS. Coiled coils occupy residues 385–435 and 500–575; these read QQLL…QLKQ and TVQM…RGRT.

The protein belongs to the CFAP100 family.

Its subcellular location is the cytoplasm. It is found in the cytoskeleton. The protein resides in the cilium axoneme. Functionally, may play a role in ciliary/flagellar motility by regulating the assembly and the activity of axonemal inner dynein arm. The protein is Cilia- and flagella-associated protein 100 of Macaca fascicularis (Crab-eating macaque).